The primary structure comprises 152 residues: Lipoprotein signal peptidase (152 aa).

The next 3 helical transmembrane spans lie at 5–25, 61–81, and 84–104; these read LFVL…FWIV, WFFV…LATH, and LNIW…GNFI. Catalysis depends on residues Asp-114 and Asp-130. A helical transmembrane segment spans residues 125 to 145; that stretch reads IFNVADSYLTVGVILLVICLW.

This sequence belongs to the peptidase A8 family.

The protein resides in the cell membrane. The catalysed reaction is Release of signal peptides from bacterial membrane prolipoproteins. Hydrolyzes -Xaa-Yaa-Zaa-|-(S,diacylglyceryl)Cys-, in which Xaa is hydrophobic (preferably Leu), and Yaa (Ala or Ser) and Zaa (Gly or Ala) have small, neutral side chains.. It participates in protein modification; lipoprotein biosynthesis (signal peptide cleavage). Functionally, this protein specifically catalyzes the removal of signal peptides from prolipoproteins. The protein is Lipoprotein signal peptidase of Streptococcus pyogenes serotype M18 (strain MGAS8232).